The chain runs to 309 residues: NAD kinase (309 aa).

Aspartate 89 (proton acceptor) is an active-site residue. NAD(+)-binding positions include 89 to 90, 163 to 164, histidine 174, arginine 191, aspartate 193, and 204 to 209; these read DG, NE, and TAYSLS.

The protein belongs to the NAD kinase family. Requires a divalent metal cation as cofactor.

Its subcellular location is the cytoplasm. It carries out the reaction NAD(+) + ATP = ADP + NADP(+) + H(+). Involved in the regulation of the intracellular balance of NAD and NADP, and is a key enzyme in the biosynthesis of NADP. Catalyzes specifically the phosphorylation on 2'-hydroxyl of the adenosine moiety of NAD to yield NADP. The chain is NAD kinase from Shewanella piezotolerans (strain WP3 / JCM 13877).